The following is a 347-amino-acid chain: S-adenosylmethionine decarboxylase proenzyme 4 (347 aa).

Active-site residues include Glu-7 and Glu-10. Glu-66 contacts substrate. Ser-67 serves as the catalytic Schiff-base intermediate with substrate; via pyruvic acid. Ser-67 bears the Pyruvic acid (Ser); by autocatalysis mark. Cys-81 functions as the Proton donor; for catalytic activity in the catalytic mechanism. Active-site proton acceptor; for processing activity residues include Ser-237 and His-250. Position 254 (Glu-254) interacts with substrate.

This sequence belongs to the eukaryotic AdoMetDC family. Pyruvate serves as cofactor. Is synthesized initially as an inactive proenzyme. Formation of the active enzyme involves a self-maturation process in which the active site pyruvoyl group is generated from an internal serine residue via an autocatalytic post-translational modification. Two non-identical subunits are generated from the proenzyme in this reaction, and the pyruvate is formed at the N-terminus of the alpha chain, which is derived from the carboxyl end of the proenzyme. The post-translation cleavage follows an unusual pathway, termed non-hydrolytic serinolysis, in which the side chain hydroxyl group of the serine supplies its oxygen atom to form the C-terminus of the beta chain, while the remainder of the serine residue undergoes an oxidative deamination to produce ammonia and the pyruvoyl group blocking the N-terminus of the alpha chain.

It carries out the reaction S-adenosyl-L-methionine + H(+) = S-adenosyl 3-(methylsulfanyl)propylamine + CO2. Its pathway is amine and polyamine biosynthesis; S-adenosylmethioninamine biosynthesis; S-adenosylmethioninamine from S-adenosyl-L-methionine: step 1/1. Essential for biosynthesis of the polyamines spermidine and spermine. Essential for polyamine homeostasis, and normal plant embryogenesis, growth and development. This Arabidopsis thaliana (Mouse-ear cress) protein is S-adenosylmethionine decarboxylase proenzyme 4.